Consider the following 660-residue polypeptide: UvrABC system protein B (660 aa).

Residues 25 to 183 (EGLNKGLKHQ…ALINIHYERN (159 aa)) enclose the Helicase ATP-binding domain. 38 to 45 (GVTGSGKT) is an ATP binding site. The short motif at 91–114 (YYDYYQPEAYLPTTDTYIEKDSSV) is the Beta-hairpin element. One can recognise a Helicase C-terminal domain in the interval 431-593 (QIDDLIGEVN…IVPQTIHKAL (163 aa)). Residues 622–657 (ADMVIELEAEMHLAAKNLEFERAAALRDNIKELRST) enclose the UVR domain.

Belongs to the UvrB family. As to quaternary structure, forms a heterotetramer with UvrA during the search for lesions. Interacts with UvrC in an incision complex.

The protein localises to the cytoplasm. The UvrABC repair system catalyzes the recognition and processing of DNA lesions. A damage recognition complex composed of 2 UvrA and 2 UvrB subunits scans DNA for abnormalities. Upon binding of the UvrA(2)B(2) complex to a putative damaged site, the DNA wraps around one UvrB monomer. DNA wrap is dependent on ATP binding by UvrB and probably causes local melting of the DNA helix, facilitating insertion of UvrB beta-hairpin between the DNA strands. Then UvrB probes one DNA strand for the presence of a lesion. If a lesion is found the UvrA subunits dissociate and the UvrB-DNA preincision complex is formed. This complex is subsequently bound by UvrC and the second UvrB is released. If no lesion is found, the DNA wraps around the other UvrB subunit that will check the other stand for damage. This is UvrABC system protein B from Methanococcoides burtonii (strain DSM 6242 / NBRC 107633 / OCM 468 / ACE-M).